A 503-amino-acid chain; its full sequence is Lysine--tRNA ligase (503 aa).

Residues Glu-414 and Glu-421 each coordinate Mg(2+).

Belongs to the class-II aminoacyl-tRNA synthetase family. As to quaternary structure, homodimer. Requires Mg(2+) as cofactor.

It localises to the cytoplasm. It carries out the reaction tRNA(Lys) + L-lysine + ATP = L-lysyl-tRNA(Lys) + AMP + diphosphate. The protein is Lysine--tRNA ligase of Neisseria gonorrhoeae (strain ATCC 700825 / FA 1090).